The chain runs to 559 residues: Glucose-6-phosphate isomerase 2 (559 aa).

The active-site Proton donor is Glu-367. Active-site residues include His-398 and Lys-522.

The protein belongs to the GPI family.

The protein resides in the cytoplasm. The catalysed reaction is alpha-D-glucose 6-phosphate = beta-D-fructose 6-phosphate. Its pathway is carbohydrate biosynthesis; gluconeogenesis. It participates in carbohydrate degradation; glycolysis; D-glyceraldehyde 3-phosphate and glycerone phosphate from D-glucose: step 2/4. Functionally, catalyzes the reversible isomerization of glucose-6-phosphate to fructose-6-phosphate. The chain is Glucose-6-phosphate isomerase 2 from Chromohalobacter salexigens (strain ATCC BAA-138 / DSM 3043 / CIP 106854 / NCIMB 13768 / 1H11).